Here is a 309-residue protein sequence, read N- to C-terminus: Sulfate adenylyltransferase subunit 2 (309 aa).

It belongs to the PAPS reductase family. CysD subfamily. As to quaternary structure, heterodimer composed of CysD, the smaller subunit, and CysN.

It carries out the reaction sulfate + ATP + H(+) = adenosine 5'-phosphosulfate + diphosphate. The protein operates within sulfur metabolism; hydrogen sulfide biosynthesis; sulfite from sulfate: step 1/3. Functionally, with CysN forms the ATP sulfurylase (ATPS) that catalyzes the adenylation of sulfate producing adenosine 5'-phosphosulfate (APS) and diphosphate, the first enzymatic step in sulfur assimilation pathway. APS synthesis involves the formation of a high-energy phosphoric-sulfuric acid anhydride bond driven by GTP hydrolysis by CysN coupled to ATP hydrolysis by CysD. The sequence is that of Sulfate adenylyltransferase subunit 2 from Mycobacterium sp. (strain KMS).